A 334-amino-acid chain; its full sequence is MAFNLKNRHLLSLVNHTEREIKFLLDLSRDLKRAKYAGTEQQRLKGKNIALIFEKTSTRTRCAFEVAAYDQGAHVTYIDPTSSQIGHKESMKDTARVLGRMYDAIEYRGFKQSVVNELAEYAGVPVFNGLTDEFHPTQMLADVLTMIENCEKPLSQISYVYIGDARNNVGNSLLLIGAKLGMDVRICAPKALLPEDSLVEMCQKFAAESGARITVTDDIDTAVKGVDFVHTDVWVSMGEPLETWGERIDMLMPYQVTPELMKRTGNPKVKFMHCLPAFHNSETKIGKQVAEKYPALANGIEVTEDVFESPANVAFEQAENRMHTIKAVMVASLA.

Residues 57–60, Q84, R108, and 135–138 contribute to the carbamoyl phosphate site; these read STRT and HPTQ. L-ornithine-binding positions include N168, D232, and 236–237; that span reads SM. Residues 274–275 and R321 contribute to the carbamoyl phosphate site; that span reads CL.

The protein belongs to the aspartate/ornithine carbamoyltransferase superfamily. OTCase family.

It localises to the cytoplasm. The catalysed reaction is carbamoyl phosphate + L-ornithine = L-citrulline + phosphate + H(+). It functions in the pathway amino-acid biosynthesis; L-arginine biosynthesis; L-arginine from L-ornithine and carbamoyl phosphate: step 1/3. Reversibly catalyzes the transfer of the carbamoyl group from carbamoyl phosphate (CP) to the N(epsilon) atom of ornithine (ORN) to produce L-citrulline. The protein is Ornithine carbamoyltransferase of Actinobacillus pleuropneumoniae serotype 5b (strain L20).